The sequence spans 346 residues: Methylthioribose-1-phosphate isomerase (346 aa).

Residues 54-56, Arg91, and Gln192 contribute to the substrate site; that span reads RGA. Asp233 (proton donor) is an active-site residue. 243-244 lines the substrate pocket; that stretch reads NK.

The protein belongs to the eIF-2B alpha/beta/delta subunits family. MtnA subfamily.

It carries out the reaction 5-(methylsulfanyl)-alpha-D-ribose 1-phosphate = 5-(methylsulfanyl)-D-ribulose 1-phosphate. It functions in the pathway amino-acid biosynthesis; L-methionine biosynthesis via salvage pathway; L-methionine from S-methyl-5-thio-alpha-D-ribose 1-phosphate: step 1/6. Functionally, catalyzes the interconversion of methylthioribose-1-phosphate (MTR-1-P) into methylthioribulose-1-phosphate (MTRu-1-P). The chain is Methylthioribose-1-phosphate isomerase from Yersinia enterocolitica serotype O:8 / biotype 1B (strain NCTC 13174 / 8081).